Here is a 23-residue protein sequence, read N- to C-terminus: Aurein-4.2 (23 aa).

This sequence belongs to the frog skin active peptide (FSAP) family. Aurein subfamily. As to expression, expressed by the skin dorsal glands.

It localises to the secreted. In terms of biological role, has no antimicrobial or anticancer activity. This Ranoidea aurea (Green and golden bell frog) protein is Aurein-4.2.